Reading from the N-terminus, the 246-residue chain is UDP-N-acetyl-D-mannosaminuronic acid transferase (246 aa).

Belongs to the glycosyltransferase 26 family.

It catalyses the reaction UDP-N-acetyl-alpha-D-mannosaminouronate + N-acetyl-alpha-D-glucosaminyl-di-trans,octa-cis-undecaprenyl diphosphate = beta-D-ManNAcA-(1-&gt;4)-alpha-D-GlcNAc-di-trans,octa-cis-undecaprenyl diphosphate + UDP + H(+). It participates in bacterial outer membrane biogenesis; enterobacterial common antigen biosynthesis. Its function is as follows. Catalyzes the synthesis of Und-PP-GlcNAc-ManNAcA (Lipid II), the second lipid-linked intermediate involved in enterobacterial common antigen (ECA) synthesis. This chain is UDP-N-acetyl-D-mannosaminuronic acid transferase, found in Escherichia coli (strain K12).